We begin with the raw amino-acid sequence, 327 residues long: MAITDTINVAIVGASGVTGGSIVNGLLALTGLTVKITALTRPESLNKPANIQLKERGVQVVAANLRGPLEKLVDLLSSIDVVISAIYWGSLDDEIPLANAAKAAGVKRFVQSAYNIPAAARGVTHLRDKKEVILSHIQQLRLPYTYIDVGWWYHVVLPRVASGRTEHALPFGMPDLPIALDGNIPSGLTHIRDIGRYIARIILDPRTVNKKVFVYNELYTQNQLCDLVERLTGEMPQRRYISEKCVQSWLQEALDELERNPSSDIALGVVSLREVFLASNVHGTNTPEYAKYLGYLDGKELYPDFTFLTYEDYVEEVLDGMHSQTVA.

A helical transmembrane segment spans residues 9-29; sequence VAIVGASGVTGGSIVNGLLAL. NADP(+) is bound by residues 13–19 and Lys-47; that span reads GASGVTG. Lys-130 serves as the catalytic Proton acceptor.

The protein belongs to the NmrA-type oxidoreductase family.

The protein localises to the membrane. It catalyses the reaction asnovolin K + AH2 = asnovolin A + A. The catalysed reaction is chermesin D methyl ester + AH2 = asnovolin J + A. It participates in secondary metabolite biosynthesis; terpenoid biosynthesis. Asnovolin J 5',6'-dehydrogenase; part of the gene cluster that mediates the biosynthesis of novofumigatonin, a heavily oxygenated meroterpenoid containing a unique orthoester moiety. The first step of the pathway is the synthesis of 3,5-dimethylorsellinic acid (DMOA) by the polyketide synthase nvfA via condensation of one acetyl-CoA starter unit with 3 malonyl-CoA units and 2 methylations. DMOA is then converted to farnesyl-DMOA by the farnesyltransferase nvfB. Epoxydation by FAD-dependent monooxygenase nvfK, followed by a protonation-initiated cyclization catalyzed by the terpene cyclase nvfL leads to the production of asnavolin H. The short chain dehydrogenase nvfC then as a 3-OH dehydrogenase of asnovolin H to yield chemesin D. There are two branches to synthesize asnovolin A from chemesin D. In one branch, chemesin D undergoes Baeyer-Villiger oxidation by nvfH, methylation by nvfJ, and enoyl reduction by the nvfM D enoylreductase that reduces the double bond between C-5'and C-6', to form respectively asnovolin I, asnovolin K, and asnovolin A. In the other branch, the methylation precedes the Baeyer-Villiger oxidation and the enoyl reduction to yield asnovolin A via the asnovolin J intermediate. Asnovolin A is further converted to fumigatonoid A by the Fe(II)/2-oxoglutarate-dependent dioxygenase nvfI that catalyzes an endoperoxidation reaction. The alpha/beta hydrolase nvfD then acts as an epimerase that converts fumigatonoid A to its C-5' epimer, which then undergoes spontaneous or nvfD-catalyzed lactonization. The following step utilizes the ketoreductase nvfG to produce fumigatonoid B. The dioxygenase nvfE further converts fumigatonoid B into fumigatonoid C. Finally the Fe(II)/2-oxoglutarate-dependent dioxygenase nvfF catalyzes two rounds of oxidation to transform fumigatonoid C into the end product, novofumigatonin A. This is Asnovolin J 5',6'-dehydrogenase nvfM from Aspergillus novofumigatus (strain IBT 16806).